The following is a 211-amino-acid chain: Large ribosomal subunit protein uL3 (211 aa).

Positions 122 to 156 (NQKRNNFGRGPMSHGSKNHRAPGSIGAGTTPGRVY) are disordered.

It belongs to the universal ribosomal protein uL3 family. As to quaternary structure, part of the 50S ribosomal subunit. Forms a cluster with proteins L14 and L19.

One of the primary rRNA binding proteins, it binds directly near the 3'-end of the 23S rRNA, where it nucleates assembly of the 50S subunit. The chain is Large ribosomal subunit protein uL3 from Nostoc sp. (strain PCC 7120 / SAG 25.82 / UTEX 2576).